The chain runs to 676 residues: RNA helicase NPH-II (676 aa).

Positions 172–347 (FSAWISHRPV…VFLPNPAFIH (176 aa)) constitute a Helicase ATP-binding domain. 185–192 (GGTGVGKT) is an ATP binding site. Positions 296–299 (DEVH) match the DEXH box motif. A Helicase C-terminal domain is found at 366–535 (NPSSRMAYIE…NYILYANKFN (170 aa)).

The protein belongs to the DEAD box helicase family. DEAH subfamily. In terms of assembly, monomer.

It localises to the virion. The catalysed reaction is ATP + H2O = ADP + phosphate + H(+). Functionally, NTP-dependent helicase that catalyzes unidirectional unwinding of 3'tailed duplex RNAs and plays an important role during transcription of early mRNAs, presumably by preventing R-loop formation behind the elongating RNA polymerase. Might also play a role in the export of newly synthesized mRNA chains out of the core into the cytoplasm. Required for replication and propagation of viral particles. The polypeptide is RNA helicase NPH-II (OPG084) (Vaccinia virus (strain Ankara) (VACV)).